The chain runs to 299 residues: Lipoyl synthase 2 (299 aa).

Residues cysteine 45, cysteine 50, cysteine 56, cysteine 71, cysteine 75, cysteine 78, and serine 295 each coordinate [4Fe-4S] cluster. The 228-residue stretch at tyrosine 57–lysine 284 folds into the Radical SAM core domain.

This sequence belongs to the radical SAM superfamily. Lipoyl synthase family. [4Fe-4S] cluster is required as a cofactor.

It is found in the cytoplasm. It carries out the reaction [[Fe-S] cluster scaffold protein carrying a second [4Fe-4S](2+) cluster] + N(6)-octanoyl-L-lysyl-[protein] + 2 oxidized [2Fe-2S]-[ferredoxin] + 2 S-adenosyl-L-methionine + 4 H(+) = [[Fe-S] cluster scaffold protein] + N(6)-[(R)-dihydrolipoyl]-L-lysyl-[protein] + 4 Fe(3+) + 2 hydrogen sulfide + 2 5'-deoxyadenosine + 2 L-methionine + 2 reduced [2Fe-2S]-[ferredoxin]. It functions in the pathway protein modification; protein lipoylation via endogenous pathway; protein N(6)-(lipoyl)lysine from octanoyl-[acyl-carrier-protein]: step 2/2. In terms of biological role, catalyzes the radical-mediated insertion of two sulfur atoms into the C-6 and C-8 positions of the octanoyl moiety bound to the lipoyl domains of lipoate-dependent enzymes, thereby converting the octanoylated domains into lipoylated derivatives. The polypeptide is Lipoyl synthase 2 (Prochlorococcus marinus subsp. pastoris (strain CCMP1986 / NIES-2087 / MED4)).